Reading from the N-terminus, the 532-residue chain is Hepatocyte nuclear factor 1-beta-B (532 aa).

The tract at residues Met1 to Glu35 is dimerization. The 32-residue stretch at Met5 to Asp36 folds into the HNF-p1 domain. A disordered region spans residues Thr74–Phe95. Residues Arg102–Gly197 enclose the POU-specific atypical domain. Positions Ser222–Ala231 are enriched in gly residues. 2 disordered regions span residues Ser222 to Arg245 and Glu500 to Trp532. The segment at residues Met244–Gln324 is a DNA-binding region (homeobox; HNF1-type). The span at Ser505 to Trp532 shows a compositional bias: polar residues.

This sequence belongs to the HNF1 homeobox family. Binds DNA as a dimer. Can form homodimer or heterodimer with HNF1-alpha. As to expression, first expressed at stage 10 in the intermediate mesoderm. Expressed in rhombomere r5 by 14 hpf with expression diminishing by 18 hpf.

Its subcellular location is the nucleus. Functionally, transcription factor that binds to the inverted palindrome 5'-GTTAATNATTAAC-3'. Acts downstream of hnf1ba but is not required for induction of rhombomere r5/r6 gene expression in the hindbrain. The polypeptide is Hepatocyte nuclear factor 1-beta-B (Danio rerio (Zebrafish)).